Here is a 309-residue protein sequence, read N- to C-terminus: RHOMBOID-like protein 5 (309 aa).

The next 7 helical transmembrane spans lie at 27-47 (IPVPWVAWLVPLILAANFVTF), 113-133 (IWLHGGFLHLMANMISLMCIG), 140-160 (FGFMRIGALYVISGLGGSLVS), 170-190 (VSVGASGALFGLLGAMLSELI), 200-220 (CTALMTLILIIVLNLSVGFLP), 222-242 (VDNSAHFGGFLAGFFLGFVLL), and 274-294 (IFRFTSLAILLAGFIAGYTKL). Ser-175 (nucleophile) is an active-site residue. The Charge relay system role is filled by His-227.

The protein belongs to the peptidase S54 family.

The protein localises to the membrane. It catalyses the reaction Cleaves type-1 transmembrane domains using a catalytic dyad composed of serine and histidine that are contributed by different transmembrane domains.. Probable rhomboid-type serine protease that catalyzes intramembrane proteolysis. May function in reproductive organs maturation. This is RHOMBOID-like protein 5 from Arabidopsis thaliana (Mouse-ear cress).